The primary structure comprises 299 residues: Glycine--tRNA ligase alpha subunit (299 aa).

The protein belongs to the class-II aminoacyl-tRNA synthetase family. In terms of assembly, tetramer of two alpha and two beta subunits.

Its subcellular location is the cytoplasm. It carries out the reaction tRNA(Gly) + glycine + ATP = glycyl-tRNA(Gly) + AMP + diphosphate. The sequence is that of Glycine--tRNA ligase alpha subunit from Caulobacter vibrioides (strain ATCC 19089 / CIP 103742 / CB 15) (Caulobacter crescentus).